The primary structure comprises 1484 residues: Ral GTPase-activating protein subunit beta (1484 aa).

Disordered stretches follow at residues 355–437 (PRSD…APRR) and 697–728 (GGENNLKSHSRTNSGISSASGGSTEPTTPDSE). At S359 the chain carries Phosphoserine. Phosphothreonine is present on residues T363 and T379. Composition is skewed to polar residues over residues 369–381 (SMPQSAAVNTTPP), 392–428 (NKATMKTSTVTTAHTSKVQHQASSTSPLSSPNQTSSE), and 701–725 (NLKSHSRTNSGISSASGGSTEPTTP). 2 positions are modified to phosphoserine: S421 and S710. The residue at position 724 (T724) is a Phosphothreonine. The Rap-GAP domain maps to 1138–1382 (IGYLDLLPCR…TTLEKEVPVI (245 aa)). S1275 carries the phosphoserine modification. The segment at 1301–1325 (DSLNSSQRLSPSSRMKKLPQGRPVP) is disordered. Over residues 1302-1313 (SLNSSQRLSPSS) the composition is skewed to low complexity.

As to quaternary structure, component of the heterodimeric RalGAP1 complex with RALGAPA1 and of the heterodimeric RalGAP2 complex with RALGAPA2. Heterodimerization is required for activity. In terms of tissue distribution, detected in brain, thymus, lung, heart, spleen, liver and testis (at protein level).

Non-catalytic subunit of the heterodimeric RalGAP1 and RalGAP2 complexes which act as GTPase activators for the Ras-like small GTPases RALA and RALB. This is Ral GTPase-activating protein subunit beta from Rattus norvegicus (Rat).